The sequence spans 297 residues: Homoserine kinase (297 aa).

ATP is bound at residue 82-92 (PLTRGLGSSAS).

It belongs to the GHMP kinase family. Homoserine kinase subfamily.

It localises to the cytoplasm. The enzyme catalyses L-homoserine + ATP = O-phospho-L-homoserine + ADP + H(+). It participates in amino-acid biosynthesis; L-threonine biosynthesis; L-threonine from L-aspartate: step 4/5. Its function is as follows. Catalyzes the ATP-dependent phosphorylation of L-homoserine to L-homoserine phosphate. The chain is Homoserine kinase from Bacillus thuringiensis (strain Al Hakam).